The following is a 409-amino-acid chain: Arginine deiminase (409 aa).

Cys-399 serves as the catalytic Amidino-cysteine intermediate.

The protein belongs to the arginine deiminase family.

It localises to the cytoplasm. It carries out the reaction L-arginine + H2O = L-citrulline + NH4(+). It participates in amino-acid degradation; L-arginine degradation via ADI pathway; carbamoyl phosphate from L-arginine: step 1/2. In Borreliella afzelii (strain PKo) (Borrelia afzelii), this protein is Arginine deiminase.